We begin with the raw amino-acid sequence, 255 residues long: Propionicin-F (255 aa).

2 propeptides span residues 1 to 101 (MNTK…RVSC) and 145 to 255 (GTPT…DETV).

It localises to the secreted. In terms of biological role, bacteriocin with specific antibacterial activity against strains of P.freudenreichii. No antibacterial activity was detected against P.acidipropionici, P.jensenii and P.thoenii. This Propionibacterium freudenreichii subsp. freudenreichii protein is Propionicin-F.